The chain runs to 467 residues: Glutamate--tRNA ligase (467 aa).

The 'HIGH' region motif lies at proline 10–glycine 20. 4 residues coordinate Zn(2+): cysteine 99, cysteine 101, cysteine 126, and glutamate 128. A 'KMSKS' region motif is present at residues arginine 236 to arginine 240. Lysine 239 provides a ligand contact to ATP.

Belongs to the class-I aminoacyl-tRNA synthetase family. Glutamate--tRNA ligase type 1 subfamily. Monomer. The cofactor is Zn(2+).

It is found in the cytoplasm. The catalysed reaction is tRNA(Glu) + L-glutamate + ATP = L-glutamyl-tRNA(Glu) + AMP + diphosphate. Functionally, catalyzes the attachment of glutamate to tRNA(Glu) in a two-step reaction: glutamate is first activated by ATP to form Glu-AMP and then transferred to the acceptor end of tRNA(Glu). The polypeptide is Glutamate--tRNA ligase (Desulfosudis oleivorans (strain DSM 6200 / JCM 39069 / Hxd3) (Desulfococcus oleovorans)).